Here is a 667-residue protein sequence, read N- to C-terminus: MLTHKTCQARKKMQVSFVIRDAEEKQHRNGVNALQLDSNNGKLYSAGRDAIIRVWNTRTESNDKYIQSMEHHNDWVNDIVLCCNGRNLISASCDTTVKVWNAHKGFCMSTLRTHRDYVQALAYAKDREQVASAGLDKAIFLWDVNTLTALTASNNTVTTSSLTGSKDSIYSLAMNPSGTVIVSGSTENILRIWDPRTCMRSMKLRGHTENVRCLVVSPDGNQVVSGSSDGTIKVWNLGQQRCIQTIHVHKEGVWSLLMSENFQYIISGSRDRNIIVTEMRNPSNKMLVCEEKAPVLSLGYNIDKTGVWATTWNSDIRCWKLPMYDRCTLSSGGMDAQWTMGGTELACIKGGAAIKECTVLNDKRYIITKDSQDQVVVYDVLRVIKKEELGPVDYEEEVKKRNKQVYIPNWFTVDLKTGMPTIVLGQEEVDCFAAWVSIEAGLPECDDPTTEIKINYGKLLLEALLEYWTPPHSMPPNEMEPDVRGNGYFQVPKHTPVIFSEVGGRTVCRLLVRDAAGDSESTLLHETAPQWVTDVVIERNIPKFLKIPFFLQPHPQMTKPERTKKDRLVANEFIQCRKVCEHVLEKVLNAETTPSGGNANNSLQNSQSDANSEGSQLPAEERIELWCNDVIVDPNMDLRTVRHFIWKQSTDLTFQYKTKQNFNFDGK.

WD repeat units follow at residues 26–65, 71–110, 113–152, 164–203, 206–245, 248–287, 290–329, and 349–388; these read QHRN…NDKY, HHND…CMST, THRD…ALTA, GSKD…RSMK, GHTE…CIQT, VHKE…NKML, EEKA…RCTL, and KGGA…KKEE. Residues 591 to 615 are disordered; sequence ETTPSGGNANNSLQNSQSDANSEGS.

The protein belongs to the WD repeat WDR48 family. In terms of assembly, catalytic component of the Usp12-46 deubiquitylase complex consisting of Usp12-46, Wdr20 and Uaf1; regulatory subunit that, together wtih Wdr20, stabilizes Usp12-46. The Usp12-46 deubiquitylase complex associates with arr/arrow; the interaction leads to deubiquitination and stabilization of arr/arrow.

Functionally, regulatory component of the Usp12-46 deubiquitylase complex. activates deubiquitination by increasing the catalytic turnover without increasing the affinity of deubiquitinating enzymes for the substrate. The complex deubiquitylates the wg/wingless-signaling receptor arr/arrow, which stabilizes the receptor and increases its concentration at the cell surface; this enhances the sensitivity of cells to wg/wingless-signal stimulation. This increases the amplitude and spatial range of the signaling response to the wg/wingless morphogen gradient, facilitating the precise concentration-dependent regulation of its target genes. Together with Wdr20 and Usp12-46 required for wg/wingless-mediated signaling in the wing imaginal disc and for wg/wingless-dependent regulation of intestinal stem cell proliferation. In Drosophila virilis (Fruit fly), this protein is WD repeat-containing protein 48 homolog.